The sequence spans 122 residues: Large ribosomal subunit protein uL14 (122 aa).

The protein belongs to the universal ribosomal protein uL14 family. Part of the 50S ribosomal subunit. Forms a cluster with proteins L3 and L19. In the 70S ribosome, L14 and L19 interact and together make contacts with the 16S rRNA in bridges B5 and B8.

Functionally, binds to 23S rRNA. Forms part of two intersubunit bridges in the 70S ribosome. The sequence is that of Large ribosomal subunit protein uL14 from Alkaliphilus metalliredigens (strain QYMF).